Reading from the N-terminus, the 83-residue chain is Omega-agatoxin-Aa4b (83 aa).

The N-terminal stretch at 1 to 20 (MKLCMTLLITAIAVVTFVVA) is a signal peptide. A propeptide spanning residues 21–35 (TQEESAEFNEVEESR) is cleaved from the precursor. Disulfide bonds link Cys39-Cys55, Cys47-Cys60, Cys54-Cys71, and Cys62-Cys69. Ser81 carries the D-serine (Ser) modification.

It belongs to the neurotoxin 02 (plectoxin) family. 03 (omega-agtx) subfamily. Post-translationally, the toxin with D-Ser (named omega-aga IVC) is 80-90 fold more potent than that with L-Ser (omega-aga IVB) against Cav2.1/CACNA1A (P-type) channels in rat cerebellar Purkinje neurons and is more resistant to proteases. The epimerization is done by the venom peptide isomerase heterodimer. In terms of tissue distribution, expressed by the venom gland.

Its subcellular location is the secreted. Antagonist of voltage-gated Cav2.1/CACNA1A (P-type) calcium channels. Paralyzes insect by blocking neuromuscular transmission. The protein is Omega-agatoxin-Aa4b of Agelenopsis aperta (North American funnel-web spider).